A 340-amino-acid polypeptide reads, in one-letter code: Glyceraldehyde-3-phosphate dehydrogenase, cytosolic (340 aa).

NAD(+)-binding positions include 16-17, Asp38, and Arg85; that span reads RI. D-glyceraldehyde 3-phosphate is bound by residues 156–158, Thr187, 216–217, and Arg239; these read SCT and TG. Cys157 acts as the Nucleophile in catalysis. Asn321 contributes to the NAD(+) binding site.

The protein belongs to the glyceraldehyde-3-phosphate dehydrogenase family. As to quaternary structure, homotetramer.

The protein resides in the cytoplasm. The enzyme catalyses D-glyceraldehyde 3-phosphate + phosphate + NAD(+) = (2R)-3-phospho-glyceroyl phosphate + NADH + H(+). It functions in the pathway carbohydrate degradation; glycolysis; pyruvate from D-glyceraldehyde 3-phosphate: step 1/5. Functionally, key enzyme in glycolysis that catalyzes the first step of the pathway by converting D-glyceraldehyde 3-phosphate (G3P) into 3-phospho-D-glyceroyl phosphate. Essential for the maintenance of cellular ATP levels and carbohydrate metabolism. The chain is Glyceraldehyde-3-phosphate dehydrogenase, cytosolic (GAPC) from Pinus sylvestris (Scotch pine).